The chain runs to 407 residues: Putative mannan endo-1,4-beta-mannosidase 9 (407 aa).

Positions 1-31 are cleaved as a signal peptide; the sequence is MGSKRRVILLPTLGVVVLAIAAAVLLHAGEA. Substrate is bound by residues W95 and N208. Catalysis depends on E209, which acts as the Proton donor. Y284 is a binding site for substrate. The active-site Nucleophile is the E324. Residue W366 coordinates substrate.

It belongs to the glycosyl hydrolase 5 (cellulase A) family. In terms of tissue distribution, expression not detected.

Its subcellular location is the secreted. The enzyme catalyses Random hydrolysis of (1-&gt;4)-beta-D-mannosidic linkages in mannans, galactomannans and glucomannans.. The protein is Putative mannan endo-1,4-beta-mannosidase 9 (MAN9) of Oryza sativa subsp. japonica (Rice).